Consider the following 477-residue polypeptide: MKAICDRFVPSKCSSSSTSEKRDISSPTSLVSDSASSDNKSNLTLCSDVVASSSPVSQLCREASTSGHNPVCTTHSSWTVILKTASMASGAIRRFQDRVLGPSRTGISSSTSEIWLLGVCYKISEGESSEEADAGRVLAAFRQDFSSLILMTYRRGFEPIGDTTYTSDVNWGCMLRSGQMLFAQALLFQRLGRSWRKKDSEPADEKYLEILELFGDTEASAFSIHNLILAGESYGLAAGSWVGPYAVCRSWESLARKNKEETDDKHKSFSMAVHIVSGSEDGERGGAPILCIEDVTKTCLEFSEGETEWPPILLLVPLVLGLDRVNPRYIPSLIATFTFPQSLGILGGKPGASTYIVGVQEDKGFYLDPHDVQQVVTVKKENQDVDTSSYHCNTLRYVPLESLDPSLALGFYCQHKDDFDDFCIRATKLAGDSNGAPLFTVTQSHRRNDCGIAETSSSTETSTEISGEEHEDDWQLL.

Residues 11–39 are disordered; the sequence is SKCSSSSTSEKRDISSPTSLVSDSASSDN. Positions 25-39 are enriched in polar residues; that stretch reads SSPTSLVSDSASSDN. The active-site Nucleophile is Cys-173. Residues Asp-368 and His-370 contribute to the active site. Residues 453-477 are disordered; that stretch reads AETSSSTETSTEISGEEHEDDWQLL. Positions 454–465 are enriched in low complexity; the sequence is ETSSSTETSTEI.

This sequence belongs to the peptidase C54 family. In terms of assembly, interacts with ATG8a and ATG8d. In terms of tissue distribution, constitutively expressed.

Its subcellular location is the cytoplasm. The catalysed reaction is [protein]-C-terminal L-amino acid-glycyl-phosphatidylethanolamide + H2O = [protein]-C-terminal L-amino acid-glycine + a 1,2-diacyl-sn-glycero-3-phosphoethanolamine. In terms of biological role, cysteine protease that plays a key role in autophagy by mediating both proteolytic activation and delipidation of ATG8 family proteins. The protease activity is required for proteolytic activation of ATG8 family proteins: cleaves the C-terminal amino acid of ATG8 proteins to reveal a C-terminal glycine. Exposure of the glycine at the C-terminus is essential for ATG8 proteins conjugation to phosphatidylethanolamine (PE) and insertion to membranes, which is necessary for autophagy. In addition to the protease activity, also mediates delipidation of PE-conjugated ATG8 proteins. This is Cysteine protease ATG4b from Arabidopsis thaliana (Mouse-ear cress).